Consider the following 407-residue polypeptide: Nuclear hormone receptor family member nhr-86 (407 aa).

Positions 21 to 96 (KSTCSICRED…VGMNPAGVQQ (76 aa)) form a DNA-binding region, nuclear receptor. 2 NR C4-type zinc fingers span residues 24–44 (CSICREDGDGYHFGAEACRAC) and 60–79 (CRGNNDCEITANIRCMCRSC). One can recognise an NR LBD domain in the interval 130-405 (AQSALVEDLH…KDFYDLVNGK (276 aa)). Positions 394 to 405 (PPKDFYDLVNGK) are AF-2.

It belongs to the nuclear hormone receptor family. Expressed in intestinal epithelial cells, excretory gland cells and in several head neurons.

It localises to the nucleus. In terms of biological role, nuclear receptor which acts as a transcription activator. Binds small molecule ligands, such as phenazine 1-carboxamide (PCN), a pathogen-derived metabolite, leading to modulation of innate immune responses against virulent pathogens. On exposure to exogenous PCN, P.aeruginosa and other xenobiotic immunostimulant such as R24, activates immune response genes, including irg-4, irg-5, mul-1, drd-50, cyp-35C1 and ugt-30, probably via direct interaction with their promoters, and independent of the p38 MAPK pmk-1 pathway. Exhibits higher affinity to R24 than PCN and thus induces stronger immune response. Binds its own promoter thereby autoregulating its expression in the head hypodermis and the pharynx. Possibly plays a role in lipid storage or catabolism. This Caenorhabditis elegans protein is Nuclear hormone receptor family member nhr-86 (nhr-86).